Here is a 263-residue protein sequence, read N- to C-terminus: LIM and SH3 domain protein 1 (263 aa).

At M1 the chain carries N-acetylmethionine. The LIM zinc-binding domain occupies 3-63 (PNCARCGKIV…NAHYPKQSFT (61 aa)). K42 is modified (N6-acetyllysine). Nebulin repeat units follow at residues 64–95 (MVAD…KNKG) and 97–131 (GFSV…KSRM). T68 carries the post-translational modification Phosphothreonine. N6-methyllysine is present on K75. S99 carries the post-translational modification Phosphoserine. T104 is modified (phosphothreonine). K112 is subject to N6-succinyllysine. 2 positions are modified to phosphoserine: S118 and S134. The segment at 122–207 (YHEEFEKSRM…QRSAPGGGGK (86 aa)) is disordered. Residues 148–162 (DSSSYRRPTEQQQPQ) are compositionally biased toward polar residues. In terms of domain architecture, SH3 spans 204-263 (GGGKRYRAVYDYSAADEDEVSFQDGDTIVNVQQIDDGWMYGTVERTGDTGMLPANYVEAI).

As to quaternary structure, interacts with F-actin. Interacts with ANKRD54. Interacts with KBTBD10. In terms of processing, phosphorylated. Expressed in a wide range of tissues (but not the heart or skeletal muscle), the expression is specific for certain actin-rich cell types within these tissues. Expression is prominent in the cortical regions of ion-transporting duct cells in the pancreas, in the salivary parotid gland and in certain F-actin-rich cells in the distal tubule/collecting duct. In primary cultures of gastric fibroblasts, expression is mainly within the tips of lamellipodia and at the leading edges of membrane ruffles.

It is found in the cytoplasm. The protein resides in the cell cortex. Its subcellular location is the cytoskeleton. Functionally, plays an important role in the regulation of dynamic actin-based, cytoskeletal activities. Agonist-dependent changes in LASP1 phosphorylation may also serve to regulate actin-associated ion transport activities, not only in the parietal cell but also in certain other F-actin-rich secretory epithelial cell types. In Rattus norvegicus (Rat), this protein is LIM and SH3 domain protein 1.